The sequence spans 423 residues: Mannose-6-phosphate isomerase (423 aa).

Position 2 is an N-acetylalanine (A2). S102 and S108 each carry phosphoserine. The Zn(2+) site is built by Q110, H112, E137, and H276. The active site involves R295.

The protein belongs to the mannose-6-phosphate isomerase type 1 family. Zn(2+) serves as cofactor. In terms of tissue distribution, expressed in all tissues, but more abundant in testis.

Its subcellular location is the cytoplasm. The catalysed reaction is D-mannose 6-phosphate = D-fructose 6-phosphate. Its pathway is nucleotide-sugar biosynthesis; GDP-alpha-D-mannose biosynthesis; alpha-D-mannose 1-phosphate from D-fructose 6-phosphate: step 1/2. In terms of biological role, isomerase that catalyzes the interconversion of fructose-6-P and mannose-6-P and has a critical role in the supply of D-mannose derivatives required for many eukaryotic glycosylation reactions. This Mus musculus (Mouse) protein is Mannose-6-phosphate isomerase.